A 150-amino-acid chain; its full sequence is Non-structural protein (150 aa).

The apoptotic activity stretch occupies residues 93–140 (PLFRIRFLLLIMSDSISLTDITISPGTLYSARTLLLRAAVLALTRKPM).

Functionally, disrupts the host mitochondrial membrane potential and induces apoptosis probably by inducing host CASP8 and CASP9. This Bos taurus (Bovine) protein is Non-structural protein.